The following is a 223-amino-acid chain: Mitochondrial cardiolipin hydrolase (223 aa).

Residues 1–6 (MGCASS) are Mitochondrial intermembrane-facing. The helical transmembrane segment at 7–24 (KEEVALTPLSDVNAAKEV) threads the bilayer. Residues 25-223 (ADLKAQVDQL…QFDKLWDMFK (199 aa)) lie on the Cytoplasmic side of the membrane. Residues 164–191 (TAAHMHHKFAIIDGRLLLNGSFNWTRQA) enclose the PLD phosphodiesterase domain. Catalysis depends on residues His-169, Lys-171, and Asp-176.

This sequence belongs to the phospholipase D family. MitoPLD/Zucchini subfamily. In terms of assembly, homodimer.

It localises to the mitochondrion outer membrane. Plays a critical role in PIWI-interacting RNA (piRNA) biogenesis. piRNAs provide essential protection against the activity of mobile genetic elements. piRNA-mediated transposon silencing is thus critical for maintaining genome stability. Backbone-non-specific, single strand-specific nuclease, cleaving either RNA or DNA substrates with similar affinity. Produces 5' phosphate and 3' hydroxyl termini, suggesting it could directly participate in the processing of primary piRNA transcripts. Has been proposed to act as a cardiolipin hydrolase to generate phosphatidic acid at mitochondrial surface. Although it cannot be excluded that it can act as a phospholipase in some circumstances, this activity could not be confirmed. The sequence is that of Mitochondrial cardiolipin hydrolase from Chlamydomonas reinhardtii (Chlamydomonas smithii).